Reading from the N-terminus, the 327-residue chain is Tetraacyldisaccharide 4'-kinase (327 aa).

Position 52-59 (52-59) interacts with ATP; it reads TLGGAGKT.

The protein belongs to the LpxK family.

The enzyme catalyses a lipid A disaccharide + ATP = a lipid IVA + ADP + H(+). It functions in the pathway glycolipid biosynthesis; lipid IV(A) biosynthesis; lipid IV(A) from (3R)-3-hydroxytetradecanoyl-[acyl-carrier-protein] and UDP-N-acetyl-alpha-D-glucosamine: step 6/6. In terms of biological role, transfers the gamma-phosphate of ATP to the 4'-position of a tetraacyldisaccharide 1-phosphate intermediate (termed DS-1-P) to form tetraacyldisaccharide 1,4'-bis-phosphate (lipid IVA). The sequence is that of Tetraacyldisaccharide 4'-kinase from Methylorubrum extorquens (strain CM4 / NCIMB 13688) (Methylobacterium extorquens).